The following is a 514-amino-acid chain: HTH-type transcriptional regulatory protein TyrR (514 aa).

Residues 2–72 (RLEVFCEDRL…GVTDVRTVPW (71 aa)) form the ACT domain. Positions 78-120 (EHLALSALLEALPEPVLSLDMKSKIEMANPASCQLFAHTQDRM) constitute a PAS domain. The Sigma-54 factor interaction domain occupies 206–428 (IIAVSAKMKH…VKNAIYRALT (223 aa)). Residues 234-241 (GNTGTGKD) and 290-299 (ANGGSVLLDE) contribute to the ATP site. A DNA-binding region (H-T-H motif) is located at residues 482–502 (STRKLAKRLGVSHTAIANKLR).

Homodimer. In presence of tyrosine (or high concentrations of phenylalanine or tryptophan) and ATP, it self-associates to form an hexamer.

The protein localises to the cytoplasm. Functionally, dual transcriptional regulator of the TyrR regulon, which includes a number of genes coding for proteins involved in the biosynthesis or transport of the three aromatic amino acids, phenylalanine, tyrosine and tryptophan. These three aromatic amino acids act as effectors which bind to the TyrR protein to form an active regulatory protein. Acts by binding specifically to TyrR boxes in the promoter region of the target genes. The chain is HTH-type transcriptional regulatory protein TyrR from Citrobacter braakii.